The following is a 426-amino-acid chain: Serine--tRNA ligase (426 aa).

228–230 serves as a coordination point for L-serine; the sequence is TSE. ATP-binding positions include 259–261 and valine 275; that span reads RRE. Residue glutamate 282 participates in L-serine binding. Position 346 to 349 (346 to 349) interacts with ATP; that stretch reads ELTS. Residue threonine 386 coordinates L-serine.

It belongs to the class-II aminoacyl-tRNA synthetase family. Type-1 seryl-tRNA synthetase subfamily. As to quaternary structure, homodimer. The tRNA molecule binds across the dimer.

Its subcellular location is the cytoplasm. It catalyses the reaction tRNA(Ser) + L-serine + ATP = L-seryl-tRNA(Ser) + AMP + diphosphate + H(+). The catalysed reaction is tRNA(Sec) + L-serine + ATP = L-seryl-tRNA(Sec) + AMP + diphosphate + H(+). It functions in the pathway aminoacyl-tRNA biosynthesis; selenocysteinyl-tRNA(Sec) biosynthesis; L-seryl-tRNA(Sec) from L-serine and tRNA(Sec): step 1/1. Functionally, catalyzes the attachment of serine to tRNA(Ser). Is also able to aminoacylate tRNA(Sec) with serine, to form the misacylated tRNA L-seryl-tRNA(Sec), which will be further converted into selenocysteinyl-tRNA(Sec). In Arthrobacter sp. (strain FB24), this protein is Serine--tRNA ligase.